We begin with the raw amino-acid sequence, 85 residues long: Large ribosomal subunit protein bL27 (85 aa).

The disordered stretch occupies residues 1–20 (MATKKAGGSTRNGRDSEAKR).

It belongs to the bacterial ribosomal protein bL27 family.

The polypeptide is Large ribosomal subunit protein bL27 (Histophilus somni (strain 129Pt) (Haemophilus somnus)).